Reading from the N-terminus, the 165-residue chain is MISDDTDQFNPRDAKSPEIAKGKSAKRREARQMATQALYQRHMAGHALNEIEAQFRVDNDFSNVDGTYFRELLHGVAINQTEIDTALTPCLDLTIEELDPIELAILRLSTFELLKRIDVPYRVVINEGIELAKVYGSTDGHKFVNGVLDKLAPRLREVEVKAHKR.

The tract at residues 1-27 (MISDDTDQFNPRDAKSPEIAKGKSAKR) is disordered. Basic and acidic residues predominate over residues 10 to 21 (NPRDAKSPEIAK).

It belongs to the NusB family.

Functionally, involved in transcription antitermination. Required for transcription of ribosomal RNA (rRNA) genes. Binds specifically to the boxA antiterminator sequence of the ribosomal RNA (rrn) operons. This Pseudomonas syringae pv. tomato (strain ATCC BAA-871 / DC3000) protein is Transcription antitermination protein NusB.